We begin with the raw amino-acid sequence, 291 residues long: Protease HtpX (291 aa).

2 helical membrane-spanning segments follow: residues 4–24 and 36–56; these read IALF…VLNI and LSGL…ISLM. Residue His-143 coordinates Zn(2+). Glu-144 is a catalytic residue. His-147 serves as a coordination point for Zn(2+). 2 helical membrane passes run 151–171 and 199–219; these read GDMI…IFLS and FIVS…LTMW. A Zn(2+)-binding site is contributed by Glu-225.

This sequence belongs to the peptidase M48B family. It depends on Zn(2+) as a cofactor.

It is found in the cell inner membrane. In Aliivibrio fischeri (strain ATCC 700601 / ES114) (Vibrio fischeri), this protein is Protease HtpX.